We begin with the raw amino-acid sequence, 354 residues long: Uroporphyrinogen decarboxylase (354 aa).

Substrate contacts are provided by residues arginine 27 to arginine 31, aspartate 77, tyrosine 154, serine 209, and histidine 327.

The protein belongs to the uroporphyrinogen decarboxylase family. In terms of assembly, homodimer.

The protein localises to the cytoplasm. The enzyme catalyses uroporphyrinogen III + 4 H(+) = coproporphyrinogen III + 4 CO2. It functions in the pathway porphyrin-containing compound metabolism; protoporphyrin-IX biosynthesis; coproporphyrinogen-III from 5-aminolevulinate: step 4/4. Its function is as follows. Catalyzes the decarboxylation of four acetate groups of uroporphyrinogen-III to yield coproporphyrinogen-III. This Teredinibacter turnerae (strain ATCC 39867 / T7901) protein is Uroporphyrinogen decarboxylase.